The following is a 320-amino-acid chain: Dermonecrotic toxin LarSicTox-alphaIB2a (320 aa).

A signal peptide spans 1 to 15 (MSHSSTALLHPYVAA). The propeptide occupies 16-41 (RATEKFAPIYFFCHPLQSAETDVAER). His52 is a catalytic residue. The Mg(2+) site is built by Glu72 and Asp74. Residue His88 is the Nucleophile of the active site. 2 disulfide bridges follow: Cys92-Cys98 and Cys94-Cys237. Asp132 serves as a coordination point for Mg(2+). Asn297 is a glycosylation site (N-linked (GlcNAc...) asparagine).

Belongs to the arthropod phospholipase D family. Class II subfamily. Requires Mg(2+) as cofactor. As to expression, expressed by the venom gland.

It is found in the secreted. The catalysed reaction is an N-(acyl)-sphingosylphosphocholine = an N-(acyl)-sphingosyl-1,3-cyclic phosphate + choline. The enzyme catalyses an N-(acyl)-sphingosylphosphoethanolamine = an N-(acyl)-sphingosyl-1,3-cyclic phosphate + ethanolamine. It catalyses the reaction a 1-acyl-sn-glycero-3-phosphocholine = a 1-acyl-sn-glycero-2,3-cyclic phosphate + choline. It carries out the reaction a 1-acyl-sn-glycero-3-phosphoethanolamine = a 1-acyl-sn-glycero-2,3-cyclic phosphate + ethanolamine. In terms of biological role, dermonecrotic toxins cleave the phosphodiester linkage between the phosphate and headgroup of certain phospholipids (sphingolipid and lysolipid substrates), forming an alcohol (often choline) and a cyclic phosphate. This toxin acts on sphingomyelin (SM). It may also act on ceramide phosphoethanolamine (CPE), lysophosphatidylcholine (LPC) and lysophosphatidylethanolamine (LPE), but not on lysophosphatidylserine (LPS), and lysophosphatidylglycerol (LPG). It acts by transphosphatidylation, releasing exclusively cyclic phosphate products as second products. Induces dermonecrosis, hemolysis, increased vascular permeability, edema, inflammatory response, and platelet aggregation. The chain is Dermonecrotic toxin LarSicTox-alphaIB2a from Loxosceles arizonica (Arizona brown spider).